The primary structure comprises 792 residues: Phenylalanine--tRNA ligase beta subunit (792 aa).

One can recognise a tRNA-binding domain in the interval 39 to 154; it reads LYSFASVITA…EATPLGEDLA (116 aa). The region spanning 403-480 is the B5 domain; sequence RELKEVALRP…ESWNIETQNP (78 aa). The Mg(2+) site is built by aspartate 456, aspartate 462, glutamate 465, and glutamate 466. An FDX-ACB domain is found at 695–791; the sequence is AIYPSSFRDL…LLTDTKGTIN (97 aa).

Belongs to the phenylalanyl-tRNA synthetase beta subunit family. Type 1 subfamily. As to quaternary structure, tetramer of two alpha and two beta subunits. Requires Mg(2+) as cofactor.

It is found in the cytoplasm. It carries out the reaction tRNA(Phe) + L-phenylalanine + ATP = L-phenylalanyl-tRNA(Phe) + AMP + diphosphate + H(+). The sequence is that of Phenylalanine--tRNA ligase beta subunit (pheT) from Chlamydia pneumoniae (Chlamydophila pneumoniae).